The chain runs to 295 residues: Pantothenate synthetase (295 aa).

Histidine 37 (proton donor) is an active-site residue. Glutamine 61 lines the (R)-pantoate pocket. Glutamine 61 contacts beta-alanine. 154–157 lines the ATP pocket; the sequence is GRKD. Glutamine 160 is a (R)-pantoate binding site. ATP contacts are provided by residues valine 183 and 191-194; that span reads QSSR.

It belongs to the pantothenate synthetase family. As to quaternary structure, homodimer.

The protein resides in the cytoplasm. It carries out the reaction (R)-pantoate + beta-alanine + ATP = (R)-pantothenate + AMP + diphosphate + H(+). The protein operates within cofactor biosynthesis; (R)-pantothenate biosynthesis; (R)-pantothenate from (R)-pantoate and beta-alanine: step 1/1. In terms of biological role, catalyzes the condensation of pantoate with beta-alanine in an ATP-dependent reaction via a pantoyl-adenylate intermediate. In Salinibacter ruber (strain DSM 13855 / M31), this protein is Pantothenate synthetase.